We begin with the raw amino-acid sequence, 388 residues long: Chaperone protein DnaJ (388 aa).

Residues 5–69 (DYYDVLGVDK…QKKAQYDQFG (65 aa)) form the J domain. Residues 145–227 (GKKTDITYTR…CHGKGTIDKK (83 aa)) form a CR-type zinc finger. Zn(2+) is bound by residues Cys158, Cys161, Cys175, Cys178, Cys201, Cys204, Cys215, and Cys218. 4 CXXCXGXG motif repeats span residues 158–165 (CPTCDGSG), 175–182 (CDKCHGTG), 201–208 (CDKCGGRG), and 215–222 (CQTCHGKG).

This sequence belongs to the DnaJ family. Homodimer. Zn(2+) serves as cofactor.

Its subcellular location is the cytoplasm. In terms of biological role, participates actively in the response to hyperosmotic and heat shock by preventing the aggregation of stress-denatured proteins and by disaggregating proteins, also in an autonomous, DnaK-independent fashion. Unfolded proteins bind initially to DnaJ; upon interaction with the DnaJ-bound protein, DnaK hydrolyzes its bound ATP, resulting in the formation of a stable complex. GrpE releases ADP from DnaK; ATP binding to DnaK triggers the release of the substrate protein, thus completing the reaction cycle. Several rounds of ATP-dependent interactions between DnaJ, DnaK and GrpE are required for fully efficient folding. Also involved, together with DnaK and GrpE, in the DNA replication of plasmids through activation of initiation proteins. This chain is Chaperone protein DnaJ, found in Lactobacillus gasseri (strain ATCC 33323 / DSM 20243 / BCRC 14619 / CIP 102991 / JCM 1131 / KCTC 3163 / NCIMB 11718 / NCTC 13722 / AM63).